Reading from the N-terminus, the 157-residue chain is DNA gyrase inhibitor (157 aa).

The protein belongs to the DNA gyrase inhibitor family. In terms of assembly, interacts with DNA gyrase.

Its subcellular location is the cytoplasm. Functionally, inhibits the supercoiling activity of DNA gyrase. Acts by inhibiting DNA gyrase at an early step, prior to (or at the step of) binding of DNA by the gyrase. It protects cells against toxins that target DNA gyrase, by inhibiting activity of these toxins and reducing the formation of lethal double-strand breaks in the cell. The sequence is that of DNA gyrase inhibitor from Yersinia enterocolitica serotype O:8 / biotype 1B (strain NCTC 13174 / 8081).